The following is a 293-amino-acid chain: Movement protein BC1 (293 aa).

This sequence belongs to the begomovirus movement protein BC1 family. As to quaternary structure, binds to dimeric supercoiled plasmid DNA. Post-translationally, phosphorylated.

Its subcellular location is the host cell membrane. It localises to the host microsome membrane. The protein resides in the host endoplasmic reticulum membrane. Functionally, transports viral genome to neighboring plant cells directly through plasmosdesmata, without any budding. The movement protein allows efficient cell to cell propagation, by bypassing the host cell wall barrier. Begomovirus genome is shuttled out of nucleus by Nuclear shuttle protein (NSP) and the movement protein transports the DNA-NSP complex to cell plasmodesmata and facilitates further movement across the cell wall. The chain is Movement protein BC1 from Cucurbita moschata (Winter crookneck squash).